We begin with the raw amino-acid sequence, 102 residues long: Cysteine-rich venom protein VAR9 (102 aa).

The N-terminal stretch at 1–19 (MILLKLYLTLAAILCQSRG) is a signal peptide. In terms of domain architecture, SCP spans 41–80 (NKHNDLRRTVDPPAKNMLKMSWDNIIAESAKRAALRCNYK).

This sequence belongs to the CRISP family. In terms of processing, contains 8 disulfide bonds. As to expression, expressed by the venom gland.

The protein localises to the secreted. Blocks ryanodine receptors, and potassium channels. This Varanus varius (Lace monitor lizard) protein is Cysteine-rich venom protein VAR9.